Reading from the N-terminus, the 367-residue chain is Probable protein phosphatase 2C 67 (367 aa).

The tract at residues 1–79 (MAHQKREATS…DEKAATNSNV (79 aa)) is disordered. The span at 31 to 46 (AEKEHILTSDASHETN) shows a compositional bias: basic and acidic residues. One can recognise a PPM-type phosphatase domain in the interval 91–365 (EADAAEDKGC…DNCTAVLIVF (275 aa)). Mn(2+)-binding residues include aspartate 131, glycine 132, aspartate 312, and aspartate 356.

It belongs to the PP2C family. Mg(2+) is required as a cofactor. Mn(2+) serves as cofactor.

It catalyses the reaction O-phospho-L-seryl-[protein] + H2O = L-seryl-[protein] + phosphate. The enzyme catalyses O-phospho-L-threonyl-[protein] + H2O = L-threonyl-[protein] + phosphate. The polypeptide is Probable protein phosphatase 2C 67 (Oryza sativa subsp. japonica (Rice)).